Reading from the N-terminus, the 114-residue chain is T cell receptor beta variable 4-3 (114 aa).

A signal peptide spans 1–21; the sequence is MGCRLLCCAVLCLLGAVPMET. In terms of domain architecture, Ig-like spans 22-114; sequence GVTQTPRHLV…SALYLCASSQ (93 aa). Cys42 and Cys110 are disulfide-bonded. N-linked (GlcNAc...) asparagine glycosylation is found at Asn76 and Asn89.

Alpha-beta TR is a heterodimer composed of an alpha and beta chain; disulfide-linked. The alpha-beta TR is associated with the transmembrane signaling CD3 coreceptor proteins to form the TR-CD3 (TcR or TCR). The assembly of alpha-beta TR heterodimers with CD3 occurs in the endoplasmic reticulum where a single alpha-beta TR heterodimer associates with one CD3D-CD3E heterodimer, one CD3G-CD3E heterodimer and one CD247 homodimer forming a stable octameric structure. CD3D-CD3E and CD3G-CD3E heterodimers preferentially associate with TR alpha and TR beta chains, respectively. The association of the CD247 homodimer is the last step of TcR assembly in the endoplasmic reticulum and is required for transport to the cell surface.

It localises to the cell membrane. In terms of biological role, v region of the variable domain of T cell receptor (TR) beta chain that participates in the antigen recognition. Alpha-beta T cell receptors are antigen specific receptors which are essential to the immune response and are present on the cell surface of T lymphocytes. Recognize peptide-major histocompatibility (MH) (pMH) complexes that are displayed by antigen presenting cells (APC), a prerequisite for efficient T cell adaptive immunity against pathogens. Binding of alpha-beta TR to pMH complex initiates TR-CD3 clustering on the cell surface and intracellular activation of LCK that phosphorylates the ITAM motifs of CD3G, CD3D, CD3E and CD247 enabling the recruitment of ZAP70. In turn ZAP70 phosphorylates LAT, which recruits numerous signaling molecules to form the LAT signalosome. The LAT signalosome propagates signal branching to three major signaling pathways, the calcium, the mitogen-activated protein kinase (MAPK) kinase and the nuclear factor NF-kappa-B (NF-kB) pathways, leading to the mobilization of transcription factors that are critical for gene expression and essential for T cell growth and differentiation. The T cell repertoire is generated in the thymus, by V-(D)-J rearrangement. This repertoire is then shaped by intrathymic selection events to generate a peripheral T cell pool of self-MH restricted, non-autoaggressive T cells. Post-thymic interaction of alpha-beta TR with the pMH complexes shapes TR structural and functional avidity. The chain is T cell receptor beta variable 4-3 from Homo sapiens (Human).